The sequence spans 64 residues: Arasin 1 (64 aa).

The signal sequence occupies residues 1-25 (MERRTLLVVLLVCSCVVAAAAEASP). The tract at residues 22–43 (EASPSRWPSPGRPRPFPGRPKP) is disordered. The segment at 26-48 (SRWPSPGRPRPFPGRPKPIFRPR) is pro/Arg-rich region responsible for antibacterial and antifungal activity. Over residues 31–43 (PGRPRPFPGRPKP) the composition is skewed to pro residues. A cystein-containing C-terminal region important for stability but not essential for antimicrobial activity region spans residues 49-62 (PCNCYAPPCPCDRW). 2 cysteine pairs are disulfide-bonded: C50–C59 and C52–C57. Positions 63–64 (RH) are excised as a propeptide.

Interacts with chitin through the N-terminal region (26-48). This interaction may be important, since chitin is a component of the fungal cell wall, as well as of the crab exoskeleton (permitting a possible action of arasin in wound healing in case of lesions). In terms of processing, disulfide bonds are important for activity especially against Gram-negative bacteria, since the linearization of the peptide causes a strong decrease of activity on these bacteria. In terms of tissue distribution, mainly expressed in hemocytes. No or very low expression in heart, gills, inestines, and epidermis.

In terms of biological role, antimicrobial peptide that has a large activity spectrum with activity against Gram-positive, Gram-negative bacteria, as well as against fungi. Shows activity at micromolar concentrations. Displays minimal inhibitory concentration (MIC) values lower than minimal bactericidal concentrations (MBC). Synthetic peptides with similar activities than the full length peptide (composed of the first 23 or 25 amino acids (Arasin 1(26-48) or Arasin 1(26-50))) may have a dual mode of action depending on the peptide concentrations. At MIC concentrations, the peptide penetrates into the cytoplasm of target cells (tested on the Gram-negative E.coli). The two inner membrane proteins YgdD and SbmA may be required for this uptake. At concentrations higher than MIC, arasin may act by disrupting membranes. Full-length and N-terminal peptides do not show hemolytic activity. This Hyas araneus (Atlantic lyre crab) protein is Arasin 1.